We begin with the raw amino-acid sequence, 140 residues long: Large-conductance mechanosensitive channel (140 aa).

Helical transmembrane passes span 9 to 29 (AFAL…GAAF) and 86 to 106 (GSFL…FLMV).

This sequence belongs to the MscL family. As to quaternary structure, homopentamer.

The protein resides in the cell inner membrane. Channel that opens in response to stretch forces in the membrane lipid bilayer. May participate in the regulation of osmotic pressure changes within the cell. The sequence is that of Large-conductance mechanosensitive channel from Anaeromyxobacter dehalogenans (strain 2CP-1 / ATCC BAA-258).